The primary structure comprises 186 residues: Ribosome-recycling factor (186 aa).

The protein belongs to the RRF family.

The protein localises to the cytoplasm. Responsible for the release of ribosomes from messenger RNA at the termination of protein biosynthesis. May increase the efficiency of translation by recycling ribosomes from one round of translation to another. The polypeptide is Ribosome-recycling factor (Methylibium petroleiphilum (strain ATCC BAA-1232 / LMG 22953 / PM1)).